An 84-amino-acid chain; its full sequence is Small ribosomal subunit protein uS17 (84 aa).

It belongs to the universal ribosomal protein uS17 family. As to quaternary structure, part of the 30S ribosomal subunit.

Functionally, one of the primary rRNA binding proteins, it binds specifically to the 5'-end of 16S ribosomal RNA. The polypeptide is Small ribosomal subunit protein uS17 (Hamiltonella defensa subsp. Acyrthosiphon pisum (strain 5AT)).